A 200-amino-acid polypeptide reads, in one-letter code: LexA repressor (200 aa).

Catalysis depends on for autocatalytic cleavage activity residues serine 121 and lysine 158.

It belongs to the peptidase S24 family. Homodimer.

The catalysed reaction is Hydrolysis of Ala-|-Gly bond in repressor LexA.. In terms of biological role, binds a consensus sequence 5'-TGTTC-N(4)-GAACA-3'; some genes have a tandem consensus sequence and their binding is cooperative. Binds to the promoters of a number of genes, including lexA and splB. Represses a number of genes involved in the response to DNA damage (SOS response). The sequence is that of LexA repressor from Opitutus terrae (strain DSM 11246 / JCM 15787 / PB90-1).